The following is a 177-amino-acid chain: Transcription antitermination protein NusB (177 aa).

The disordered stretch occupies residues 1–35; the sequence is MTDSANPTPSARPPRQPRTGTTGTGARKAGSKSGR. Residues 17-28 show a composition bias toward low complexity; sequence PRTGTTGTGARK.

The protein belongs to the NusB family.

Involved in transcription antitermination. Required for transcription of ribosomal RNA (rRNA) genes. Binds specifically to the boxA antiterminator sequence of the ribosomal RNA (rrn) operons. This Acidovorax ebreus (strain TPSY) (Diaphorobacter sp. (strain TPSY)) protein is Transcription antitermination protein NusB.